We begin with the raw amino-acid sequence, 350 residues long: LysM domain-containing GPI-anchored protein 2 (350 aa).

The N-terminal stretch at 1 to 23 is a signal peptide; it reads METSCFTLLGLLVSLSFFLTLSA. N-linked (GlcNAc...) asparagine glycans are attached at residues N30, N48, N76, and N99. 4 disulfide bridges follow: C31-C97, C38-C161, C95-C159, and C97-C161. LysM domains lie at 108 to 155 and 172 to 216; these read IEYT…KFWI and YAHV…PLDV. Residues 114–120 and 142–149 each bind chitin; these read KDDILSF and PDPNKIEI. N-linked (GlcNAc...) asparagine glycans are attached at residues N193, N238, N258, N289, and N305. Intrachain disulfides connect C221-C253 and C248-C277. D318 carries the GPI-anchor amidated aspartate lipid modification. The propeptide at 319-350 is removed in mature form; that stretch reads SAGPDNYASTLSSSFNFVIVLIQCALLCLCLL.

In terms of assembly, forms homooligomers. Interacts with CERK1. Binds to chitin oligosaccharide elicitor.

It is found in the cell membrane. Its function is as follows. Chitin elicitor-binding protein involved in the perception of chitin oligosaccharide elicitor. In Arabidopsis thaliana (Mouse-ear cress), this protein is LysM domain-containing GPI-anchored protein 2 (LYM2).